Reading from the N-terminus, the 253-residue chain is DNA repair protein RecO (253 aa).

The protein belongs to the RecO family.

Its function is as follows. Involved in DNA repair and RecF pathway recombination. This Streptococcus agalactiae serotype Ia (strain ATCC 27591 / A909 / CDC SS700) protein is DNA repair protein RecO.